The chain runs to 430 residues: Tol-Pal system protein TolB (430 aa).

An N-terminal signal peptide occupies residues 1 to 21; it reads MKQALRVAFGFLMLWAAVLHA.

Belongs to the TolB family. The Tol-Pal system is composed of five core proteins: the inner membrane proteins TolA, TolQ and TolR, the periplasmic protein TolB and the outer membrane protein Pal. They form a network linking the inner and outer membranes and the peptidoglycan layer.

The protein localises to the periplasm. Functionally, part of the Tol-Pal system, which plays a role in outer membrane invagination during cell division and is important for maintaining outer membrane integrity. TolB occupies a key intermediary position in the Tol-Pal system because it communicates directly with both membrane-embedded components, Pal in the outer membrane and TolA in the inner membrane. This Klebsiella pneumoniae (strain 342) protein is Tol-Pal system protein TolB.